Reading from the N-terminus, the 638-residue chain is Growth hormone receptor (638 aa).

Positions methionine 1–alanine 18 are cleaved as a signal peptide. Residues phenylalanine 19–tyrosine 264 lie on the Extracellular side of the membrane. Asparagine 46 carries an N-linked (GlcNAc...) asparagine glycan. 2 cysteine pairs are disulfide-bonded: cysteine 56/cysteine 66 and cysteine 101/cysteine 112. Asparagine 115 carries an N-linked (GlcNAc...) asparagine glycan. Residues cysteine 126 and cysteine 140 are joined by a disulfide bond. Residues proline 151–methionine 254 enclose the Fibronectin type-III domain. N-linked (GlcNAc...) asparagine glycosylation is found at asparagine 156, asparagine 161, and asparagine 200. The WSXWS motif signature appears at tyrosine 240 to serine 244. Residues phenylalanine 265 to serine 288 form a helical membrane-spanning segment. Over lysine 289–proline 638 the chain is Cytoplasmic. The interval lysine 294–valine 379 is required for JAK2 binding. The Box 1 motif signature appears at isoleucine 297–lysine 305. Residues aspartate 340–aspartate 349 carry the UbE motif motif. Residue serine 341 is modified to Phosphoserine. The segment at proline 353–serine 388 is disordered. Basic and acidic residues predominate over residues lysine 356–lysine 372. Phosphotyrosine is present on residues tyrosine 487 and tyrosine 595.

This sequence belongs to the type I cytokine receptor family. Type 1 subfamily. On growth hormone (GH) binding, forms homodimers and binds JAK2 via a box 1-containing domain. The soluble form (GHBP) is produced by phorbol ester-promoted proteolytic cleavage at the cell surface (shedding) by ADAM17/TACE. Shedding is inhibited by growth hormone (GH) binding to the receptor probably due to a conformational change in GHR rendering the receptor inaccessible to ADAM17. Post-translationally, on GH binding, phosphorylated on tyrosine residues in the cytoplasmic domain by JAK2. In terms of processing, ubiquitinated by the ECS(SOCS2) complex following ligand-binding and phosphorylation by JAK2, leading to its degradation by the proteasome. Regulation by the ECS(SOCS2) complex acts as a negative feedback loop of growth hormone receptor signaling. Ubiquitination is not sufficient for GHR internalization.

The protein resides in the cell membrane. The protein localises to the secreted. Receptor for pituitary gland growth hormone (GH1) involved in regulating postnatal body growth. On ligand binding, couples to the JAK2/STAT5 pathway. Functionally, the soluble form (GHBP) acts as a reservoir of growth hormone in plasma and may be a modulator/inhibitor of GH signaling. The polypeptide is Growth hormone receptor (GHR) (Papio anubis (Olive baboon)).